The chain runs to 571 residues: Proline--tRNA ligase (571 aa).

Belongs to the class-II aminoacyl-tRNA synthetase family. ProS type 1 subfamily. In terms of assembly, homodimer.

Its subcellular location is the cytoplasm. It catalyses the reaction tRNA(Pro) + L-proline + ATP = L-prolyl-tRNA(Pro) + AMP + diphosphate. Its function is as follows. Catalyzes the attachment of proline to tRNA(Pro) in a two-step reaction: proline is first activated by ATP to form Pro-AMP and then transferred to the acceptor end of tRNA(Pro). As ProRS can inadvertently accommodate and process non-cognate amino acids such as alanine and cysteine, to avoid such errors it has two additional distinct editing activities against alanine. One activity is designated as 'pretransfer' editing and involves the tRNA(Pro)-independent hydrolysis of activated Ala-AMP. The other activity is designated 'posttransfer' editing and involves deacylation of mischarged Ala-tRNA(Pro). The misacylated Cys-tRNA(Pro) is not edited by ProRS. The sequence is that of Proline--tRNA ligase from Shewanella frigidimarina (strain NCIMB 400).